We begin with the raw amino-acid sequence, 320 residues long: Probable cell division protein WhiA (320 aa).

The H-T-H motif DNA-binding region spans 282 to 315 (TLKELGEMLSPAIGKSGVNHRLRKIDEIATKLQE).

It belongs to the WhiA family.

Functionally, involved in cell division and chromosome segregation. This chain is Probable cell division protein WhiA, found in Alkaliphilus oremlandii (strain OhILAs) (Clostridium oremlandii (strain OhILAs)).